We begin with the raw amino-acid sequence, 141 residues long: Hemoglobin subunit alpha-D (141 aa).

The Globin domain occupies M1 to R141. 2 residues coordinate heme b: H58 and H87.

This sequence belongs to the globin family. In terms of assembly, heterotetramer of two alpha-D chains and two beta chains. In terms of tissue distribution, red blood cells.

Functionally, involved in oxygen transport from the lung to the various peripheral tissues. The sequence is that of Hemoglobin subunit alpha-D (HBAD) from Anas platyrhynchos (Mallard).